A 160-amino-acid polypeptide reads, in one-letter code: DNA topoisomerase small subunit (160 aa).

In terms of assembly, part of the DNA topoisomerase complex made of gp39, gp52 and gp60. Requires Mg(2+) as cofactor.

The enzyme catalyses ATP-dependent breakage, passage and rejoining of double-stranded DNA.. Small subunit of the DNA topoisomerase that untwists superhelical DNA. Controls topological states of double-stranded DNA by transient breakage and subsequent rejoining of DNA strands. This is DNA topoisomerase small subunit (60) from Enterobacteria phage T4 (Bacteriophage T4).